Here is a 190-residue protein sequence, read N- to C-terminus: Xanthine phosphoribosyltransferase (190 aa).

Residues L20 and N27 each contribute to the xanthine site. 127–131 is a 5-phospho-alpha-D-ribose 1-diphosphate binding site; sequence AYGNA. Position 155 (K155) interacts with xanthine.

This sequence belongs to the purine/pyrimidine phosphoribosyltransferase family. Xpt subfamily. As to quaternary structure, homodimer.

The protein localises to the cytoplasm. The catalysed reaction is XMP + diphosphate = xanthine + 5-phospho-alpha-D-ribose 1-diphosphate. It participates in purine metabolism; XMP biosynthesis via salvage pathway; XMP from xanthine: step 1/1. Functionally, converts the preformed base xanthine, a product of nucleic acid breakdown, to xanthosine 5'-monophosphate (XMP), so it can be reused for RNA or DNA synthesis. The polypeptide is Xanthine phosphoribosyltransferase (Bacteroides thetaiotaomicron (strain ATCC 29148 / DSM 2079 / JCM 5827 / CCUG 10774 / NCTC 10582 / VPI-5482 / E50)).